The following is a 456-amino-acid chain: Smoothelin-like protein 2 (456 aa).

Residues 24–88 (LEGAVRALHE…RQVEALGLAT (65 aa)) adopt a coiled-coil conformation. Thr96 bears the Phosphothreonine mark. Residues Ser98, Ser126, and Ser131 each carry the phosphoserine modification. Positions 120-129 (HATFSLSGRS) are enriched in polar residues. 3 disordered regions span residues 120–140 (HATF…ASDL), 154–190 (GHQL…RMPH), and 220–310 (VGGF…GAQA). A compositionally biased stretch (basic and acidic residues) spans 131-140 (SVEHDEASDL). Over residues 163-174 (NGSSEVQTSSAQ) the composition is skewed to polar residues. Over residues 242–251 (SSSFTRSLSG) the composition is skewed to low complexity. Phosphoserine is present on residues Ser250, Ser252, and Ser265. Over residues 268 to 279 (LVTPPQSPPSSQ) the composition is skewed to pro residues. Thr270 carries the post-translational modification Phosphothreonine. Ser274 carries the post-translational modification Phosphoserine. Polar residues predominate over residues 298–308 (RSQTLPRTSGA). Phosphoserine is present on Ser339. In terms of domain architecture, Calponin-homology (CH) spans 346–453 (SSIKQILLEW…YVQSLYNHLR (108 aa)).

It belongs to the smoothelin family.

The sequence is that of Smoothelin-like protein 2 (Smtnl2) from Mus musculus (Mouse).